The following is a 339-amino-acid chain: MLDPRAQTLLKTLIERYIAEGQPVGSRTLSRYSGLELSPATIRNVMSDLEDLGLVISPHTSAGRIPTPRGYRLFVDTMLTVESAADEEAVTRTVKTTLQAGEPQKIVAAAASVLSNLSQFAGVVLTPRRSHVFKQIEFMRLSDKRILLIIVTPEGDVQNRIMATQRDFSPSQLVEASNYINAHFAGLSFDDVRRRLREEIDALRGDMTTLMHAAVTASTDESDTGETVLISGERNLLEVADLSSDMARLRKLFDVFDQKTSLLQLLDVSSHAAGVQIFIGGESNLVPIEEMSVVTAPYEVNGKIVGTLGVIGPTRMAYNRVIPIVDITARLLSLTLSQQ.

It belongs to the HrcA family.

Functionally, negative regulator of class I heat shock genes (grpE-dnaK-dnaJ and groELS operons). Prevents heat-shock induction of these operons. The protein is Heat-inducible transcription repressor HrcA of Paraburkholderia phytofirmans (strain DSM 17436 / LMG 22146 / PsJN) (Burkholderia phytofirmans).